Here is a 204-residue protein sequence, read N- to C-terminus: Inner membrane protein YagU (204 aa).

Topologically, residues 1–14 (MNIFEQTPPNRRRY) are periplasmic. The helical transmembrane segment at 15–35 (GLAAFIGLIAGVVSAFVKWGA) threads the bilayer. At 36-100 (EVPLPPRSPV…VYTFAGHVFN (65 aa)) the chain is on the cytoplasmic side. The helical transmembrane segment at 101–121 (WVGVTHIIFSIVFAVGYCVVA) threads the bilayer. Over 122-132 (EVFPKIKLWQG) the chain is Periplasmic. Residues 133-153 (LLAGALAQLFVHMISFPLMGL) traverse the membrane as a helical segment. Topologically, residues 154-204 (TPPLFDLPWYENVSEIFGHLVWFWSIEIIRRDLRNRITHEPDPEIPLGSNR) are cytoplasmic.

In terms of assembly, homodimer.

It localises to the cell inner membrane. This is Inner membrane protein YagU (yagU) from Escherichia coli (strain K12).